A 629-amino-acid polypeptide reads, in one-letter code: tRNA uridine 5-carboxymethylaminomethyl modification enzyme MnmG (629 aa).

13 to 18 (GGGHAG) lines the FAD pocket. Residue 273–287 (GPRYCPSIEDKIHRF) participates in NAD(+) binding.

The protein belongs to the MnmG family. As to quaternary structure, homodimer. Heterotetramer of two MnmE and two MnmG subunits. FAD is required as a cofactor.

The protein localises to the cytoplasm. Its function is as follows. NAD-binding protein involved in the addition of a carboxymethylaminomethyl (cmnm) group at the wobble position (U34) of certain tRNAs, forming tRNA-cmnm(5)s(2)U34. This chain is tRNA uridine 5-carboxymethylaminomethyl modification enzyme MnmG, found in Shewanella baltica (strain OS195).